Here is an 89-residue protein sequence, read N- to C-terminus: Small ribosomal subunit protein uS15 (89 aa).

The protein belongs to the universal ribosomal protein uS15 family. Part of the 30S ribosomal subunit. Forms a bridge to the 50S subunit in the 70S ribosome, contacting the 23S rRNA.

One of the primary rRNA binding proteins, it binds directly to 16S rRNA where it helps nucleate assembly of the platform of the 30S subunit by binding and bridging several RNA helices of the 16S rRNA. Its function is as follows. Forms an intersubunit bridge (bridge B4) with the 23S rRNA of the 50S subunit in the ribosome. In Frankia alni (strain DSM 45986 / CECT 9034 / ACN14a), this protein is Small ribosomal subunit protein uS15.